The primary structure comprises 1866 residues: Protein strawberry notch homolog (1866 aa).

Low complexity predominate over residues 19-28; sequence QQSSPTPSTS. Disordered stretches follow at residues 19–63, 132–151, 156–253, 561–581, and 1112–1308; these read QQSS…HSSS, TAPT…IVPK, LFET…GLPI, GMAS…QKAK, and GLSG…ARGS. Composition is skewed to polar residues over residues 37-63 and 134-146; these read QSFS…HSSS and PTVN…TPTV. Over residues 161 to 176 the composition is skewed to low complexity; sequence TADSPTPSGDTSTTAS. Polar residues-rich tracts occupy residues 191 to 203 and 210 to 228; these read DRQN…TARS and TPST…LTQR. Residues 229–239 show a composition bias toward low complexity; the sequence is SHTSSPASSAS. Polar residues predominate over residues 566–577; that stretch reads RLQTTPQPLTKS. Low complexity predominate over residues 1112 to 1126; the sequence is GLSGIGRSSMSSSTG. A compositionally biased stretch (acidic residues) spans 1142–1152; sequence DGSDDEVENDM. A compositionally biased stretch (basic and acidic residues) spans 1164–1177; the sequence is ESAREEAEGARTLE. The segment covering 1194-1213 has biased composition (acidic residues); sequence SSSDDSDEEVVKDEDEDEEA. 2 stretches are compositionally biased toward basic and acidic residues: residues 1262–1281 and 1290–1304; these read RDEE…EERR and RRAE…EELQ.

This sequence belongs to the SBNO family. Expressed in the somatic gonad, neurons, hypodermal cells, seam cells, the excretory system, and intestinal cells (at protein level).

The protein localises to the nucleus. Its function is as follows. Transcriptional activator that functions upstream of the let-60/Ras and let-23/EGFR signaling pathways to positively regulate lin-3 expression and thereby promote vulval induction. Plays a role in excretory duct development. Plays a role in male tail development. This chain is Protein strawberry notch homolog, found in Caenorhabditis elegans.